The following is a 3387-amino-acid chain: MNQRKKVVRPPFNMLKRERNRVSTPQGLVKRFSTGLFSGKGPLRMVLAFITFLRVLSIPPTAGILKRWGQLKKNKAIKILTGFRKEIGRMLNILNGRKRSTMTLLCLIPTAMAFHLSTRDGEPLMIVARHERGRPLLFKTTEGINKCTLIAMDLGEMCEDTVTYECPLLVNTEPEDIDCWCNLTSAWVMYGTCTQSGERRREKRSVALTPHSGMGLETRAETWMSSEGAWKHAQRVESWILRNPGFALLAGFMAYMIGQTGIQRTVFFVLMMLVAPSYGMRCVGVGNRDFVEGVSGGAWVDLVLEHGGCVTTMAQGKPTLDFELIKTTAKEVALLRTYCIEASISNITTATRCPTQGEPYLKEEQDQQYICRRDVVDRGWGNGCGLFGKGGVVTCAKFSCSGKITGNLVQIENLEYTVVVTVHNGDTHAVGNDIPNHGVTATITPRSPSVEVKLPDYGELTLDCEPRSGIDFNEMILMKMKKKTWLVHKQWFLDLPLPWAAGADTSEVHWNYKERMVTFKVPHAKRQDVTVLGSQEGAMHSALTGATEVDSGDGNHMFAGHLKCKVRMEKLRIKGMSYTMCSGKFSIDKEMAETQHGTTVVKVKYEGAGAPCKVPIEIRDVNKEKVVGRIISSTPFAEYTNSVTNIELEPPFGDSYIVIGVGDSALTLHWFRKGSSIGKMLESTYRGAKRMAILGETAWDFGSVGGLLTSLGKAVHQVFGSVYTTMFGGVSWMVRILIGFLVLWIGTNSRNTSMAMTCIAVGGITLFLGFTVHADTGCAVSWSGKELKCGSGIFVIDNVHTWTEQYKFQPESPARLASAILNAHEDGVCGIRSTTRLENIMWKQITNELNYVLWEGGHDLTVVAGDVKGVLSKGKRALAPPVNDLKYSWKTWGKAKIFTPEAKNSTFLIDGPDTSECPNERRAWNFLEVEDYGFGMFTTNIWMKFREGSSEVCDHRLMSAAIKDQKAVHADMGYWIESSKNQTWQIEKASLIEVKTCLWPKTHTLWSNGVLESQMLIPKAYAGPFSQHNYRQGYATQTVGPWHLGKLEIDFGECPGTTVTIQEDCDHRGPSLRTTTASGKLVTQWCCRSCTMPPLRFLGEDGCWYGMEIRPLSEKEENMVKSQVSAGQGTSETFSMGLLCLTLFVEECLRRRVTRKHMILVVVTTLCAIILGGLTWMDLLRALIMLGDTMSGRMGGQIHLAIMAVFKMSPGYVLGIFLRKLTSRETALMVIGMAMTTVLSIPHDLMEFIDGISLGLILLKMVTHFDNTQVGTLALSLTFIRSTMPLVMAWRTIMAVLFVVTLIPLCRTSCLQKQSHWVEITALILGAQALPVYLMTLMKGASKRSWPLNEGIMAVGLVSLLGSALLKNDVPLAGPMVAGGLLLAAYVMSGSSADLSLEKAANVQWDEMADITGSSPIIEVKQDEDGSFSIRDIEETNMITLLVKLALITVSGLYPLAIPVTMTLWYMWQVKTQRSGALWDVPSPAAAQKATLTEGVYRIMQRGLFGKTQVGVGIHMEGVFHTMWHVTRGSVICHETGRLEPSWADVRNDMISYGGGWRLGDKWDKEEDVQVLAIEPGKNPKHVQTKPGLFKTLTGEIGAVTLDFKPGTSGSPIINRKGKVIGLYGNGVVTKSGDYVSAITQAERTGEPDYEVDEDIFRKKRLTIMDLHPGAGKTKRILPSIVREALKRRLRTLILAPTRVVAAEMEEALRGLPIRYQTPAVKSEHTGREIVDLMCHATFTTRLLSSTRVPNYNLIVMDEAHFTDPSSVAARGYISTRVEMGEAAAIFMTATPPGATDPFPQSNSPIEDIEREIPERSWNTGFDWITDYQGKTVWFVPSIKAGNDIANCLRKSGKKVIQLSRKTFDTEYPKTKLTDWDFVVTTDISEMGANFRAGRVIDPRRCLKPVISTDGPERVILAGPIPVTPASAAQRRGRIGRNPAQEDDQYVFSGDPLKNDEDHAHWTEAKMLLDNIYTPEGIIPTLFGPEREKNQAIDGEFRLRGEQRKTFVELMRRGDLPVWLSYKVASAGISYKDREWCFTGERNNQILEENMEVEIWTREGEKKKLRPKWLDARVYADPMALKDFKEFASGRKSITLDILTEIASLPTYLSSRAKLALDNIVMLHTTERGGKAYQHALNELPESLETLMLVALLGAMTAGIFLFFMQGKGIGKLSMGLIAIAVASGLLWVAEIQPQWIAASIILEFFLMVLLIPEPEKQRTPQDNQLIYVILTILTIIGLIAANEMGLIEKTKTDFGFYQVKTETTILDVDLRPASAWTLYAVATTILTPMLRHTIENTSANLSLAAIANQAAVLMGLGKGWPLHRMDLGVPLLAMGCYSQVNPTTLIASLVMLLVHYAIIGPGLQAKATREAQKRTAAGIMKNPTVDGITVIDLEPISYDPKFEKQLGQVMLLVLCAGQLLLMRTTWAFCEVLTLATGPVLTLWEGNPGRFWNTTIAVSTANIFRGSYLAGAGLAFSLIKNAQTPRRGTGTTGETLGEKWKRQLNSLDRKEFEEYKRSGILEVDRTEAKSALKDGSKIKHAVSRGSSKIRWIVERGMVKPKGKVVDLGCGRGGWSYYMATLKNVTEVKGYTKGGPGHEEPIPMATYGWNLVKLHSGVDVFYKPTEQVDTLLCDIGESSSNPTIEEGRTLRVLKMVEPWLSSKPEFCIKVLNPYMPTVIEELEKLQRKHGGSLVRCPLSRNSTHEMYWVSGVSGNIVSSVNTTSKMLLNRFTTRHRKPTYEKDVDLGAGTRSVSTETEKPDMTIIGRRLQRLQEEHKETWHYDQENPYRTWAYHGSYEAPSTGSASSMVNGVVKLLTKPWDVIPMVTQLAMTDTTPFGQQRVFKEKVDTRTPQPKPGTRMVMTTTANWLWALLGKKKNPRLCTREEFISKVRSNAAIGAVFQEEQGWTSASEAVNDSRFWELVDKERALHQEGKCESCVYNMMGKREKKLGEFGRAKGSRAIWYMWLGARFLEFEALGFLNEDHWFGRENSWSGVEGEGLHRLGYILEDIDKKDGDLIYADDTAGWDTRITEDDLLNEELITEQMAPHHKILAKAIFKLTYQNKVVKVLRPTPKGAVMDIISRKDQRGSGQVGTYGLNTFTNMEVQLIRQMEAEGVITQDDMHNPKGLKERVEKWLKECGVDRLKRMAISGDDCVVKPLDERFSTSLLFLNDMGKVRKDIPQWEPSKGWKNWQEVPFCSHHFHKIFMKDGRSLVVPCRNQDELIGRARISQGAGWSLRETACLGKAYAQMWSLMYFHRRDLRLASMAICSAVPTEWFPTSRTTWSIHAHHQWMTTEDMLKVWNRVWIEDNPNMTDKTPVHSWEDIPYLGKREDLWCGSLIGLSSRATWAKNIHTAITQVRNLIGKEEYVDYMPVMKRYSAPFESEGVL.

The Cytoplasmic portion of the chain corresponds to 1–100; that stretch reads MNQRKKVVRP…LNILNGRKRS (100 aa). A hydrophobic; homodimerization of capsid protein C region spans residues 36-71; the sequence is LFSGKGPLRMVLAFITFLRVLSIPPTAGILKRWGQL. The propeptide at 100-113 is ER anchor for the capsid protein C, removed in mature form by serine protease NS3; sequence STMTLLCLIPTAMA. Residues 101–117 form a helical membrane-spanning segment; sequence TMTLLCLIPTAMAFHLS. The Extracellular segment spans residues 118-237; the sequence is TRDGEPLMIV…GAWKHAQRVE (120 aa). Asparagine 182 is a glycosylation site (N-linked (GlcNAc...) asparagine; by host). The chain crosses the membrane as a helical span at residues 238–258; that stretch reads SWILRNPGFALLAGFMAYMIG. Topologically, residues 259 to 265 are cytoplasmic; sequence QTGIQRT. Residues 266 to 279 traverse the membrane as a helical segment; it reads VFFVLMMLVAPSYG. Residues 280-723 are Extracellular-facing; it reads MRCVGVGNRD…AVHQVFGSVY (444 aa). Disulfide bonds link cysteine 282–cysteine 309, cysteine 339–cysteine 400, cysteine 353–cysteine 384, cysteine 371–cysteine 395, cysteine 464–cysteine 564, and cysteine 581–cysteine 612. An N-linked (GlcNAc...) asparagine; by host glycan is attached at asparagine 346. The interval 377 to 390 is fusion peptide; sequence DRGWGNGCGLFGKG. The chain crosses the membrane as a helical span at residues 724–746; the sequence is TTMFGGVSWMVRILIGFLVLWIG. At 747 to 750 the chain is on the cytoplasmic side; it reads TNSR. Residues 751–771 form a helical membrane-spanning segment; sequence NTSMAMTCIAVGGITLFLGFT. Residues 772 to 1194 lie on the Extracellular side of the membrane; sequence VHADTGCAVS…MLGDTMSGRM (423 aa). Disulfide bonds link cysteine 778/cysteine 789, cysteine 829/cysteine 917, cysteine 953/cysteine 997, cysteine 1054/cysteine 1103, cysteine 1065/cysteine 1087, and cysteine 1086/cysteine 1090. N-linked (GlcNAc...) asparagine; by host glycans are attached at residues asparagine 904 and asparagine 981. Residues 1195–1218 form a helical membrane-spanning segment; that stretch reads GGQIHLAIMAVFKMSPGYVLGIFL. Over 1219–1224 the chain is Lumenal; the sequence is RKLTSR. Residues 1225-1243 traverse the membrane as a helical segment; the sequence is ETALMVIGMAMTTVLSIPH. The Cytoplasmic segment spans residues 1244-1267; it reads DLMEFIDGISLGLILLKMVTHFDN. The chain crosses the membrane as a helical span at residues 1268–1288; it reads TQVGTLALSLTFIRSTMPLVM. Alanine 1289 is a topological domain (lumenal). A helical transmembrane segment spans residues 1290–1308; sequence WRTIMAVLFVVTLIPLCRT. Topologically, residues 1309-1316 are lumenal; sequence SCLQKQSH. A helical transmembrane segment spans residues 1317–1337; the sequence is WVEITALILGAQALPVYLMTL. The Cytoplasmic segment spans residues 1338–1345; it reads MKGASKRS. The chain crosses the membrane as a helical span at residues 1346–1366; the sequence is WPLNEGIMAVGLVSLLGSALL. At 1367 to 1369 the chain is on the lumenal side; sequence KND. A helical membrane pass occupies residues 1370–1390; the sequence is VPLAGPMVAGGLLLAAYVMSG. The Cytoplasmic segment spans residues 1391–1437; it reads SSADLSLEKAANVQWDEMADITGSSPIIEVKQDEDGSFSIRDIEETN. Residues 1397–1436 form an interacts with and activates NS3 protease region; that stretch reads LEKAANVQWDEMADITGSSPIIEVKQDEDGSFSIRDIEET. An intramembrane region (helical) is located at residues 1438–1458; that stretch reads MITLLVKLALITVSGLYPLAI. The Cytoplasmic portion of the chain corresponds to 1459-2146; the sequence is PVTMTLWYMW…LNELPESLET (688 aa). The 178-residue stretch at 1475–1652 folds into the Peptidase S7 domain; it reads SGALWDVPSP…ERTGEPDYEV (178 aa). Catalysis depends on charge relay system; for serine protease NS3 activity residues histidine 1525, aspartate 1549, and serine 1609. One can recognise a Helicase ATP-binding domain in the interval 1654-1810; sequence EDIFRKKRLT…QSNSPIEDIE (157 aa). The tract at residues 1658–1661 is important for RNA-binding; that stretch reads RKKR. 1667 to 1674 contributes to the ATP binding site; the sequence is LHPGAGKT. The DEAH box signature appears at 1758–1761; the sequence is DEAH. One can recognise a Helicase C-terminal domain in the interval 1820–1987; that stretch reads TGFDWITDYQ…IIPTLFGPER (168 aa). The residue at position 1862 (lysine 1862) is an N6-acetyllysine; by host. A helical membrane pass occupies residues 2147–2167; it reads LMLVALLGAMTAGIFLFFMQG. Topologically, residues 2168–2169 are lumenal; the sequence is KG. Residues 2170–2190 constitute an intramembrane region (helical); it reads IGKLSMGLIAIAVASGLLWVA. Residue glutamate 2191 is a topological domain, lumenal. A helical transmembrane segment spans residues 2192–2212; that stretch reads IQPQWIAASIILEFFLMVLLI. Topologically, residues 2213 to 2225 are cytoplasmic; the sequence is PEPEKQRTPQDNQ. The chain crosses the membrane as a helical span at residues 2226-2246; sequence LIYVILTILTIIGLIAANEMG. Residues 2247-2270 lie on the Lumenal side of the membrane; the sequence is LIEKTKTDFGFYQVKTETTILDVD. The helical intramembrane region spans 2271–2291; that stretch reads LRPASAWTLYAVATTILTPML. Residues 2292-2301 are Lumenal-facing; it reads RHTIENTSAN. Residues asparagine 2297 and asparagine 2301 are each glycosylated (N-linked (GlcNAc...) asparagine; by host). Residues 2302-2322 constitute an intramembrane region (helical); sequence LSLAAIANQAAVLMGLGKGWP. The Lumenal segment spans residues 2323 to 2343; the sequence is LHRMDLGVPLLAMGCYSQVNP. A helical membrane pass occupies residues 2344–2364; the sequence is TTLIASLVMLLVHYAIIGPGL. Residues 2365 to 2409 lie on the Cytoplasmic side of the membrane; sequence QAKATREAQKRTAAGIMKNPTVDGITVIDLEPISYDPKFEKQLGQ. Residues 2410 to 2430 form a helical membrane-spanning segment; sequence VMLLVLCAGQLLLMRTTWAFC. The Lumenal portion of the chain corresponds to 2431–2455; it reads EVLTLATGPVLTLWEGNPGRFWNTT. Asparagine 2453 is a glycosylation site (N-linked (GlcNAc...) asparagine; by host). A helical membrane pass occupies residues 2456-2476; that stretch reads IAVSTANIFRGSYLAGAGLAF. The Cytoplasmic segment spans residues 2477–3387; that stretch reads SLIKNAQTPR…SAPFESEGVL (911 aa). Residues 2489-2751 form the mRNA cap 0-1 NS5-type MT domain; sequence TGTTGETLGE…DVDLGAGTRS (263 aa). Serine 2543 serves as a coordination point for S-adenosyl-L-methionine. A Phosphoserine modification is found at serine 2543. Lysine 2548 acts as the For 2'-O-MTase activity in catalysis. An SUMO-interacting motif motif is present at residues 2564 to 2567; sequence VVDL. Residues glycine 2573, tryptophan 2574, threonine 2591, lysine 2592, aspartate 2618, and valine 2619 each contribute to the S-adenosyl-L-methionine site. Aspartate 2633 acts as the For 2'-O-MTase activity in catalysis. Position 2634 (isoleucine 2634) interacts with S-adenosyl-L-methionine. Catalysis depends on for 2'-O-MTase activity residues lysine 2668 and glutamate 2704. S-adenosyl-L-methionine is bound at residue tyrosine 2706. Zn(2+) contacts are provided by glutamate 2925, histidine 2929, cysteine 2934, and cysteine 2937. The RdRp catalytic domain occupies 3016–3166; the sequence is LIYADDTAGW…PLDERFSTSL (151 aa). The Zn(2+) site is built by histidine 3200, cysteine 3216, and cysteine 3335.

The protein in the N-terminal section; belongs to the class I-like SAM-binding methyltransferase superfamily. mRNA cap 0-1 NS5-type methyltransferase family. In terms of assembly, homodimer. Interacts (via N-terminus) with host EXOC1 (via C-terminus); this interaction results in EXOC1 degradation through the proteasome degradation pathway. As to quaternary structure, forms heterodimers with envelope protein E in the endoplasmic reticulum and Golgi. Homodimer; in the endoplasmic reticulum and Golgi. Interacts with protein prM. Interacts with non-structural protein 1. In terms of assembly, homodimer; Homohexamer when secreted. Interacts with envelope protein E. As to quaternary structure, interacts (via N-terminus) with serine protease NS3. Forms a heterodimer with serine protease NS3. May form homooligomers. In terms of assembly, forms a heterodimer with NS2B. Interacts with NS4B. Interacts with unphosphorylated RNA-directed RNA polymerase NS5; this interaction stimulates RNA-directed RNA polymerase NS5 guanylyltransferase activity. As to quaternary structure, interacts with host MAVS; this interaction inhibits the synthesis of IFN-beta. Interacts with host AUP1; the interaction occurs in the presence of Dengue virus NS4B and induces lipophagy which facilitates production of virus progeny particles. Interacts with serine protease NS3. In terms of assembly, homodimer. Interacts with host STAT2; this interaction inhibits the phosphorylation of the latter, and, when all viral proteins are present (polyprotein), targets STAT2 for degradation. Interacts with serine protease NS3. Interacts with host PAF1 complex; the interaction may prevent the recruitment of the PAF1 complex to interferon-responsive genes, and thus reduces the immune response. In terms of processing, specific enzymatic cleavages in vivo yield mature proteins. Cleavages in the lumen of endoplasmic reticulum are performed by host signal peptidase, whereas cleavages in the cytoplasmic side are performed by serine protease NS3. Signal cleavage at the 2K-4B site requires a prior NS3 protease-mediated cleavage at the 4A-2K site. Cleaved in post-Golgi vesicles by a host furin, releasing the mature small envelope protein M, and peptide pr. This cleavage is incomplete as up to 30% of viral particles still carry uncleaved prM. Post-translationally, N-glycosylated. In terms of processing, N-glycosylated. The excreted form is glycosylated and this is required for efficient secretion of the protein from infected cells. Acetylated by host KAT5. Acetylation modulates NS3 RNA-binding and unwinding activities and plays an important positive role for viral replication. Post-translationally, sumoylation of RNA-directed RNA polymerase NS5 increases NS5 protein stability allowing proper viral RNA replication. In terms of processing, phosphorylated on serines residues. This phosphorylation may trigger NS5 nuclear localization.

It is found in the virion. Its subcellular location is the host nucleus. The protein resides in the host cytoplasm. The protein localises to the host perinuclear region. It localises to the secreted. It is found in the virion membrane. Its subcellular location is the host endoplasmic reticulum membrane. The protein resides in the host mitochondrion. It catalyses the reaction Selective hydrolysis of -Xaa-Xaa-|-Yaa- bonds in which each of the Xaa can be either Arg or Lys and Yaa can be either Ser or Ala.. The enzyme catalyses RNA(n) + a ribonucleoside 5'-triphosphate = RNA(n+1) + diphosphate. The catalysed reaction is a ribonucleoside 5'-triphosphate + H2O = a ribonucleoside 5'-diphosphate + phosphate + H(+). It carries out the reaction ATP + H2O = ADP + phosphate + H(+). It catalyses the reaction a 5'-end (5'-triphosphoguanosine)-ribonucleoside in mRNA + S-adenosyl-L-methionine = a 5'-end (N(7)-methyl 5'-triphosphoguanosine)-ribonucleoside in mRNA + S-adenosyl-L-homocysteine. The enzyme catalyses a 5'-end (N(7)-methyl 5'-triphosphoguanosine)-ribonucleoside in mRNA + S-adenosyl-L-methionine = a 5'-end (N(7)-methyl 5'-triphosphoguanosine)-(2'-O-methyl-ribonucleoside) in mRNA + S-adenosyl-L-homocysteine + H(+). In terms of biological role, plays a role in virus budding by binding to the cell membrane and gathering the viral RNA into a nucleocapsid that forms the core of a mature virus particle. During virus entry, may induce genome penetration into the host cytoplasm after hemifusion induced by the surface proteins. Can migrate to the cell nucleus where it modulates host functions. Overcomes the anti-viral effects of host EXOC1 by sequestering and degrading the latter through the proteasome degradation pathway. Functionally, inhibits RNA silencing by interfering with host Dicer. Its function is as follows. Prevents premature fusion activity of envelope proteins in trans-Golgi by binding to envelope protein E at pH6.0. After virion release in extracellular space, gets dissociated from E dimers. Acts as a chaperone for envelope protein E during intracellular virion assembly by masking and inactivating envelope protein E fusion peptide. prM is the only viral peptide matured by host furin in the trans-Golgi network probably to avoid catastrophic activation of the viral fusion activity in acidic Golgi compartment prior to virion release. prM-E cleavage is inefficient, and many virions are only partially matured. These uncleaved prM would play a role in immune evasion. In terms of biological role, may play a role in virus budding. Exerts cytotoxic effects by activating a mitochondrial apoptotic pathway through M ectodomain. May display a viroporin activity. Functionally, binds to host cell surface receptor and mediates fusion between viral and cellular membranes. Envelope protein is synthesized in the endoplasmic reticulum in the form of heterodimer with protein prM. They play a role in virion budding in the ER, and the newly formed immature particle is covered with 60 spikes composed of heterodimer between precursor prM and envelope protein E. The virion is transported to the Golgi apparatus where the low pH causes dissociation of PrM-E heterodimers and formation of E homodimers. prM-E cleavage is inefficient, and many virions are only partially matured. These uncleaved prM would play a role in immune evasion. Its function is as follows. Involved in immune evasion, pathogenesis and viral replication. Once cleaved off the polyprotein, is targeted to three destinations: the viral replication cycle, the plasma membrane and the extracellular compartment. Essential for viral replication. Required for formation of the replication complex and recruitment of other non-structural proteins to the ER-derived membrane structures. Excreted as a hexameric lipoparticle that plays a role against host immune response. Antagonizing the complement function. Binds to the host macrophages and dendritic cells. Inhibits signal transduction originating from Toll-like receptor 3 (TLR3). Disrupts the host endothelial glycocalyx layer of host pulmonary microvascular endothelial cells, inducing degradation of sialic acid and shedding of heparan sulfate proteoglycans. NS1 induces expression of sialidases, heparanase, and activates cathepsin L, which activates heparanase via enzymatic cleavage. These effects are probably linked to the endothelial hyperpermeability observed in severe dengue disease. In terms of biological role, component of the viral RNA replication complex that functions in virion assembly and antagonizes the host immune response. Functionally, required cofactor for the serine protease function of NS3. May have membrane-destabilizing activity and form viroporins. Its function is as follows. Displays three enzymatic activities: serine protease, NTPase and RNA helicase. NS3 serine protease, in association with NS2B, performs its autocleavage and cleaves the polyprotein at dibasic sites in the cytoplasm: C-prM, NS2A-NS2B, NS2B-NS3, NS3-NS4A, NS4A-2K and NS4B-NS5. NS3 RNA helicase binds RNA and unwinds dsRNA in the 3' to 5' direction. Regulates the ATPase activity of the NS3 helicase activity. NS4A allows NS3 helicase to conserve energy during unwinding. Plays a role in the inhibition of the host innate immune response. Interacts with host MAVS and thereby prevents the interaction between RIGI and MAVS. In turn, IFN-beta production is impaired. Interacts with host AUP1 which mediates induction of lipophagy in host cells and facilitates production of virus progeny particles. In terms of biological role, functions as a signal peptide for NS4B and is required for the interferon antagonism activity of the latter. Functionally, induces the formation of ER-derived membrane vesicles where the viral replication takes place. Inhibits interferon (IFN)-induced host STAT1 phosphorylation and nuclear translocation, thereby preventing the establishment of cellular antiviral state by blocking the IFN-alpha/beta pathway. Its function is as follows. Replicates the viral (+) and (-) RNA genome, and performs the capping of genomes in the cytoplasm. NS5 methylates viral RNA cap at guanine N-7 and ribose 2'-O positions. Besides its role in RNA genome replication, also prevents the establishment of cellular antiviral state by blocking the interferon-alpha/beta (IFN-alpha/beta) signaling pathway. Inhibits host TYK2 and STAT2 phosphorylation, thereby preventing activation of JAK-STAT signaling pathway. May reduce immune responses by preventing the recruitment of the host PAF1 complex to interferon-responsive genes. This Aedes aegypti (Yellowfever mosquito) protein is Genome polyprotein.